A 275-amino-acid chain; its full sequence is NH(3)-dependent NAD(+) synthetase (275 aa).

G46–S53 contributes to the ATP binding site. Residue D52 coordinates Mg(2+). A deamido-NAD(+)-binding site is contributed by R140. An ATP-binding site is contributed by T160. E165 is a binding site for Mg(2+). The deamido-NAD(+) site is built by K173 and D180. ATP is bound by residues K189 and T211. H260 to K261 is a deamido-NAD(+) binding site.

This sequence belongs to the NAD synthetase family. Homodimer.

The catalysed reaction is deamido-NAD(+) + NH4(+) + ATP = AMP + diphosphate + NAD(+) + H(+). It participates in cofactor biosynthesis; NAD(+) biosynthesis; NAD(+) from deamido-NAD(+) (ammonia route): step 1/1. Catalyzes the ATP-dependent amidation of deamido-NAD to form NAD. Uses ammonia as a nitrogen source. In Escherichia coli O139:H28 (strain E24377A / ETEC), this protein is NH(3)-dependent NAD(+) synthetase.